We begin with the raw amino-acid sequence, 190 residues long: Xanthine phosphoribosyltransferase (190 aa).

Residues Leu-20 and Asn-27 each coordinate xanthine. A 5-phospho-alpha-D-ribose 1-diphosphate-binding site is contributed by 128–132; that stretch reads ANGHA. Residue Lys-156 coordinates xanthine.

It belongs to the purine/pyrimidine phosphoribosyltransferase family. Xpt subfamily. Homodimer.

Its subcellular location is the cytoplasm. The enzyme catalyses XMP + diphosphate = xanthine + 5-phospho-alpha-D-ribose 1-diphosphate. The protein operates within purine metabolism; XMP biosynthesis via salvage pathway; XMP from xanthine: step 1/1. Converts the preformed base xanthine, a product of nucleic acid breakdown, to xanthosine 5'-monophosphate (XMP), so it can be reused for RNA or DNA synthesis. This is Xanthine phosphoribosyltransferase from Pseudomonas aeruginosa (strain LESB58).